The sequence spans 461 residues: Zinc finger protein ZFP2 (461 aa).

13 consecutive C2H2-type zinc fingers follow at residues 102-124 (YECNQCSKTFSQSSSLLKHQRIH), 130-152 (YKCNVCGKHFIERSSLTVHQRIH), 158-180 (YKCNECGKAFSQSMNLTVHQRTH), 186-208 (YQCKECGKAFHKNSSLIQHERIH), 214-236 (YKCNECGKAFTQSMNLTVHQRTH), 242-264 (YECNECGKAFSQSMHLIVHQRSH), 270-292 (YECSQCGKAFSKSSTLTLHQRNH), 298-320 (YKCNKCGKSFSQSTYLIEHQRLH), 326-348 (FECNECGKAFSKNSSLTQHRRIH), 354-376 (YECMVCGKHFTGRSSLTVHQVIH), 382-404 (YECNECGKAFSQSAYLIEHQRIH), 410-432 (YECDQCGKAFIKNSSLTVHQRTH), and 438-460 (YQCNECGKAFSRSTNLTRHQRTH).

The protein belongs to the krueppel C2H2-type zinc-finger protein family.

Its subcellular location is the nucleus. Its function is as follows. Probable transcription factor involved in neuronal differentiation and/or phenotypic maintenance. In Homo sapiens (Human), this protein is Zinc finger protein ZFP2 (ZFP2).